Consider the following 334-residue polypeptide: Putative fatty acid elongase 1 (334 aa).

The Lumenal portion of the chain corresponds to 1 to 51 (MDLTGAHMLKIHRPSIDHPFGVDLWHLFEQLSIKTIGWNPSEFEYIPGKTP). Residues 52 to 72 (MSQWSSVIVSITAYYVIILSG) traverse the membrane as a helical segment. The Cytoplasmic portion of the chain corresponds to 73-86 (RAIMTNRKPLKQRR). The chain crosses the membrane as a helical span at residues 87–107 (LFQLHNFILTIISGALLALLV). At 108 to 135 (EEVFRNYMRNGLFYCVCDSRHFTQRLVT) the chain is on the lumenal side. The helical transmembrane segment at 136 to 156 (LYYLNYLTKYLELMDTVFLFL) threads the bilayer. The Cytoplasmic segment spans residues 157–160 (KKKP). Residues 161-181 (LAFLHCYHHGITALLCFTQLL) form a helical membrane-spanning segment. Topologically, residues 182–187 (GRTSVQ) are lumenal. A helical transmembrane segment spans residues 188–208 (WGVIGLNLYVHVIMYSYYFLA). At 209-224 (ACGRRVWWKQWVTRVQ) the chain is on the cytoplasmic side. The chain crosses the membrane as a helical span at residues 225–245 (IIQFVLDLILCYFGTYSHIAF). The Lumenal segment spans residues 246–260 (RYFPWLPHVGDCSGS). Residues 261-281 (LFAAFFGCGVLSSYLFLFIGF) traverse the membrane as a helical segment. The Cytoplasmic segment spans residues 282-334 (YINTYIKRGAKKNQRKAAGKADNTSVAAAAGSEALAATTATNASPFSARSRKL). Ser325 is modified (phosphoserine).

This sequence belongs to the ELO family.

The protein localises to the endoplasmic reticulum membrane. It catalyses the reaction a very-long-chain acyl-CoA + malonyl-CoA + H(+) = a very-long-chain 3-oxoacyl-CoA + CO2 + CoA. May be involved in the synthesis of very long chain fatty acids. The polypeptide is Putative fatty acid elongase 1 (Schizosaccharomyces pombe (strain 972 / ATCC 24843) (Fission yeast)).